A 226-amino-acid polypeptide reads, in one-letter code: Thymidylate kinase (226 aa).

20–27 contacts ATP; that stretch reads GGEGAGKS.

Belongs to the thymidylate kinase family.

It carries out the reaction dTMP + ATP = dTDP + ADP. Phosphorylation of dTMP to form dTDP in both de novo and salvage pathways of dTTP synthesis. In Bradyrhizobium sp. (strain ORS 278), this protein is Thymidylate kinase.